The following is a 334-amino-acid chain: Inositol 2-dehydrogenase (334 aa).

It belongs to the Gfo/Idh/MocA family. In terms of assembly, homotetramer.

The enzyme catalyses myo-inositol + NAD(+) = scyllo-inosose + NADH + H(+). Involved in the oxidation of myo-inositol (MI) to 2-keto-myo-inositol (2KMI or 2-inosose). The sequence is that of Inositol 2-dehydrogenase from Cereibacter sphaeroides (strain ATCC 17029 / ATH 2.4.9) (Rhodobacter sphaeroides).